Consider the following 411-residue polypeptide: Protein-lysine 6-oxidase (411 aa).

Positions 1 to 21 are cleaved as a signal peptide; the sequence is MRFAWTVLFLGQLQFCPLLRC. A propeptide spans 22–162 (removed by BMP1); the sequence is APQAPREPPA…PPSHVDRMVG (141 aa). A disordered region spans residues 60–168; the sequence is PQRRRDSSAT…RMVGDDPYNP (109 aa). N-linked (GlcNAc...) asparagine glycosylation is found at asparagine 91 and asparagine 138. Tyrosine 181 is subject to Sulfotyrosine. Residues 207-411 are lysyl-oxidase like; the sequence is PDLVPDPYYI…YASGCTISPY (205 aa). Disulfide bonds link cysteine 232–cysteine 238, cysteine 285–cysteine 334, cysteine 318–cysteine 324, cysteine 345–cysteine 355, and cysteine 392–cysteine 406. Histidine 286, histidine 288, and histidine 290 together coordinate Cu cation. The segment at residues 314–349 is a cross-link (lysine tyrosylquinone (Lys-Tyr)); that stretch reads KASFCLEDTSCDYGYHRRFACTAHTQGLSPGCYDTY. Position 349 is a 2',4',5'-topaquinone (tyrosine 349).

Belongs to the lysyl oxidase family. As to quaternary structure, interacts with MFAP4. Interacts (via propeptide) with EFEMP2; this interaction is strong and facilitates formation of ternary complexes with ELN during elastic fiber assembly; this interaction limits interaction of EFEMP2 with FBLN5. It depends on Cu cation as a cofactor. The cofactor is lysine tyrosylquinone residue. Post-translationally, the lysine tyrosylquinone cross-link (LTQ) is generated by condensation of the epsilon-amino group of a lysine with a topaquinone produced by oxidation of tyrosine. In terms of processing, proteolytically cleaved by BMP1 which removes the propeptide. Also proteolytically cleaved by ADAMTS2 and ADAMTS14, but not by ADAMTS3, at an additional cleavage site downstream of the BMP1 cleavage site. The propeptide plays a role in directing the deposition of this enzyme to elastic fibers, via interaction with tropoelastin. Cleavage by BMP1 to remove the propeptide does not increase enzymatic activity but increases binding to collagen. Cleavage by ADAMTS2 produces a form with reduced collagen-binding activity. Sulfated at Tyr-181 and also at either Tyr-177 or Tyr-178 which enhances binding to collagen. In terms of tissue distribution, aorta and lung.

It localises to the secreted. It is found in the extracellular space. The catalysed reaction is L-lysyl-[protein] + O2 + H2O = (S)-2-amino-6-oxohexanoyl-[protein] + H2O2 + NH4(+). Its function is as follows. Responsible for the post-translational oxidative deamination of peptidyl lysine residues in precursors to fibrous collagen and elastin. Regulator of Ras expression. May play a role in tumor suppression. Plays a role in the aortic wall architecture. This chain is Protein-lysine 6-oxidase, found in Rattus norvegicus (Rat).